The sequence spans 355 residues: Uroporphyrinogen decarboxylase (355 aa).

Substrate contacts are provided by residues arginine 27–arginine 31, aspartate 77, tyrosine 154, threonine 209, and histidine 327.

It belongs to the uroporphyrinogen decarboxylase family. As to quaternary structure, homodimer.

The protein localises to the cytoplasm. The enzyme catalyses uroporphyrinogen III + 4 H(+) = coproporphyrinogen III + 4 CO2. Its pathway is porphyrin-containing compound metabolism; protoporphyrin-IX biosynthesis; coproporphyrinogen-III from 5-aminolevulinate: step 4/4. Catalyzes the decarboxylation of four acetate groups of uroporphyrinogen-III to yield coproporphyrinogen-III. The chain is Uroporphyrinogen decarboxylase from Yersinia pestis bv. Antiqua (strain Antiqua).